The chain runs to 173 residues: NADH-ubiquinone oxidoreductase chain 6 (173 aa).

Transmembrane regions (helical) follow at residues 1-21 (MTYF…AVAS), 27-47 (YGVV…LSLG), 48-68 (VSFV…VVFV), 91-111 (GVSF…IGCL), and 139-159 (CGVG…FVVL).

This sequence belongs to the complex I subunit 6 family.

The protein resides in the mitochondrion membrane. It carries out the reaction a ubiquinone + NADH + 5 H(+)(in) = a ubiquinol + NAD(+) + 4 H(+)(out). Functionally, core subunit of the mitochondrial membrane respiratory chain NADH dehydrogenase (Complex I) that is believed to belong to the minimal assembly required for catalysis. Complex I functions in the transfer of electrons from NADH to the respiratory chain. The immediate electron acceptor for the enzyme is believed to be ubiquinone. The protein is NADH-ubiquinone oxidoreductase chain 6 (MT-ND6) of Fratercula cirrhata (Tufted puffin).